The chain runs to 240 residues: Ribosomal RNA small subunit methyltransferase J (240 aa).

S-adenosyl-L-methionine-binding positions include 93 to 94 and aspartate 162; that span reads RD.

The protein belongs to the methyltransferase superfamily. RsmJ family.

Its subcellular location is the cytoplasm. It catalyses the reaction guanosine(1516) in 16S rRNA + S-adenosyl-L-methionine = N(2)-methylguanosine(1516) in 16S rRNA + S-adenosyl-L-homocysteine + H(+). Specifically methylates the guanosine in position 1516 of 16S rRNA. In Francisella philomiragia subsp. philomiragia (strain ATCC 25017 / CCUG 19701 / FSC 153 / O#319-036), this protein is Ribosomal RNA small subunit methyltransferase J.